Consider the following 100-residue polypeptide: Urease subunit gamma (100 aa).

Belongs to the urease gamma subunit family. In terms of assembly, heterotrimer of UreA (gamma), UreB (beta) and UreC (alpha) subunits. Three heterotrimers associate to form the active enzyme.

It localises to the cytoplasm. The enzyme catalyses urea + 2 H2O + H(+) = hydrogencarbonate + 2 NH4(+). Its pathway is nitrogen metabolism; urea degradation; CO(2) and NH(3) from urea (urease route): step 1/1. The protein is Urease subunit gamma of Rhodococcus opacus (strain B4).